Reading from the N-terminus, the 467-residue chain is Cell division protein FtsP (467 aa).

The tat-type signal signal peptide spans 1 to 28; sequence MRSLTRRDFLKSGILASSLSCIPQSVMA.

The protein belongs to the FtsP family. Predicted to be exported by the Tat system. The position of the signal peptide cleavage has not been experimentally proven.

The protein resides in the periplasm. Functionally, cell division protein that is required for growth during stress conditions. May be involved in protecting or stabilizing the divisomal assembly under conditions of stress. The protein is Cell division protein FtsP of Histophilus somni (strain 2336) (Haemophilus somnus).